A 434-amino-acid chain; its full sequence is Ribulose bisphosphate carboxylase-like protein (434 aa).

K198, D200, and E201 together coordinate Mg(2+). The residue at position 198 (K198) is an N6-carboxylysine.

This sequence belongs to the RuBisCO large chain family. Type IV subfamily. As to quaternary structure, homodimer. The cofactor is Mg(2+).

Functionally, may be involved in sulfur metabolism and oxidative stress response. Does not show RuBisCO activity. The sequence is that of Ribulose bisphosphate carboxylase-like protein from Chlorobaculum thiosulfatiphilum (Chlorobium limicola f.sp. thiosulfatophilum).